Here is a 176-residue protein sequence, read N- to C-terminus: ATP synthase subunit b (176 aa).

Residues 18–38 form a helical membrane-spanning segment; the sequence is FGLDATVWVSIAMLVFLGILV.

The protein belongs to the ATPase B chain family. In terms of assembly, F-type ATPases have 2 components, F(1) - the catalytic core - and F(0) - the membrane proton channel. F(1) has five subunits: alpha(3), beta(3), gamma(1), delta(1), epsilon(1). F(0) has three main subunits: a(1), b(2) and c(10-14). The alpha and beta chains form an alternating ring which encloses part of the gamma chain. F(1) is attached to F(0) by a central stalk formed by the gamma and epsilon chains, while a peripheral stalk is formed by the delta and b chains.

It localises to the cell inner membrane. In terms of biological role, f(1)F(0) ATP synthase produces ATP from ADP in the presence of a proton or sodium gradient. F-type ATPases consist of two structural domains, F(1) containing the extramembraneous catalytic core and F(0) containing the membrane proton channel, linked together by a central stalk and a peripheral stalk. During catalysis, ATP synthesis in the catalytic domain of F(1) is coupled via a rotary mechanism of the central stalk subunits to proton translocation. Its function is as follows. Component of the F(0) channel, it forms part of the peripheral stalk, linking F(1) to F(0). This Sphingopyxis alaskensis (strain DSM 13593 / LMG 18877 / RB2256) (Sphingomonas alaskensis) protein is ATP synthase subunit b.